A 100-amino-acid chain; its full sequence is A-type ATP synthase subunit F (100 aa).

It belongs to the V-ATPase F subunit family. Has multiple subunits with at least A(3), B(3), C, D, E, F, H, I and proteolipid K(x).

It is found in the cell membrane. Its function is as follows. Component of the A-type ATP synthase that produces ATP from ADP in the presence of a proton gradient across the membrane. This is A-type ATP synthase subunit F from Methanocorpusculum labreanum (strain ATCC 43576 / DSM 4855 / Z).